Consider the following 1398-residue polypeptide: DNA topoisomerase 2 (1398 aa).

Residues Asn-69, Asn-103, 131-133 (SDN), and 144-151 (GRNGFGAK) contribute to the ATP site. The disordered stretch occupies residues 260–317 (NSNDNKNNKGQNDNNNNNNNNNDENANQNNDNLDVSLSNEPADGTPTKNNNNNNNNND). Residues 267–291 (NKGQNDNNNNNNNNNDENANQNNDN) show a composition bias toward low complexity. 411–413 (QTK) provides a ligand contact to ATP. Residues 493 to 608 (CTLILTEGDS…SLLKHKGFLS (116 aa)) form the Toprim domain. Glu-499, Asp-577, and Asp-579 together coordinate Mg(2+). Residues 739-1191 (IPNIMDGWKP…TVETMWLKDI (453 aa)) enclose the Topo IIA-type catalytic domain. Tyr-830 functions as the O-(5'-phospho-DNA)-tyrosine intermediate in the catalytic mechanism. Positions 1012–1021 (KLKSTLTTTN) are interaction with DNA. Disordered regions lie at residues 1214–1250 (KFKVARKQGPSSMKKKKKKKKLSSDEESEGGDTSDSS) and 1262–1361 (NTNK…NSSI). Over residues 1262–1276 (NTNKKTTTSSNNVNN) the composition is skewed to low complexity. Composition is skewed to polar residues over residues 1287-1300 (LNSNELDNTLSVSK) and 1348-1357 (DSTNDNNSEL).

Belongs to the type II topoisomerase family. In terms of assembly, homodimer. Mg(2+) is required as a cofactor. Requires Mn(2+) as cofactor. The cofactor is Ca(2+).

It is found in the nucleus. The catalysed reaction is ATP-dependent breakage, passage and rejoining of double-stranded DNA.. Control of topological states of DNA by transient breakage and subsequent rejoining of DNA strands. Topoisomerase II makes double-strand breaks. The protein is DNA topoisomerase 2 (TOP2) of Plasmodium falciparum (isolate K1 / Thailand).